Reading from the N-terminus, the 588-residue chain is Succinate dehydrogenase flavoprotein subunit (588 aa).

Residues 14–19 (GAGGAG), 37–52 (SKVF…AQGG), and D221 contribute to the FAD site. Residue H45 is modified to Tele-8alpha-FAD histidine. Positions 242 and 254 each coordinate substrate. The residue at position 267 (K267) is an N6-acetyllysine. The Proton acceptor role is filled by R286. H354 serves as a coordination point for substrate. E388 contributes to the FAD binding site. R399 is a substrate binding site. 404 to 405 (SL) contributes to the FAD binding site.

The protein belongs to the FAD-dependent oxidoreductase 2 family. FRD/SDH subfamily. In terms of assembly, part of an enzyme complex containing four subunits: a flavoprotein, an iron-sulfur, cytochrome b-556, and a hydrophobic anchor protein. The complex forms trimers. Requires FAD as cofactor.

The protein resides in the cell inner membrane. It carries out the reaction a quinone + succinate = fumarate + a quinol. It participates in carbohydrate metabolism; tricarboxylic acid cycle; fumarate from succinate (bacterial route): step 1/1. Two distinct, membrane-bound, FAD-containing enzymes are responsible for the catalysis of fumarate and succinate interconversion; the fumarate reductase is used in anaerobic growth, and the succinate dehydrogenase is used in aerobic growth. The polypeptide is Succinate dehydrogenase flavoprotein subunit (sdhA) (Escherichia coli O157:H7).